The following is a 1162-amino-acid chain: MLVTPLLLVTLLCALCSAVLYDSSSYVYYYQSAFRPPSGWHLQGGAYAVVNISSEFNNAGSSSGCTVGIIHGGRVVNASSIAMTAPSSGMAWSSSQFCTAHCNFSDTTVFVTHCYKHGGCPLTGMLQQNLIRVSAMKNGQLFYNLTVSVAKYPTFRSFQCVNNLTSVYLNGDLVYTSNETIDVTSAGVYFKAGGPITYKVMREVKALAYFVNGTAQDVILCDGSPRGLLACQYNTGNFSDGFYPFTNSSLVKQKFIVYRENSVNTTCTLHNFIFHNETGANPNPSGVQNIQTYQTKTAQSGYYNFNFSFLSSFVYKESNFMYGSYHPSCKFRLETINNGLWFNSLSVSIAYGPLQGGCKQSVFKGRATCCYAYSYGGPSLCKGVYSGELDHNFECGLLVYVTKSGGSRIQTATEPPVITQNNYNNITLNTCVDYNIYGRTGQGFITNVTDSAVSYNYLADAGLAILDTSGSIDIFVVQGEYGLNYYKVNPCEDVNQQFVVSGGKLVGILTSRNETGSQLLENQFYIKITNGTRRFRRSITENVANCPYVSYGKFCIKPDGSIATIVPKQLEQFVAPLFNVTENVLIPNSFNLTVTDEYIQTRMDKVQINCLQYVCGSSLDCRKLFQQYGPVCDNILSVVNSVGQKEDMELLNFYSSTKPAGFNTPVLSNVSTGEFNISLLLTNPSSRRKRSLIEDLLFTSVESVGLPTNDAYKNCTAGPLGFFKDLACAREYNGLLVLPPIITAEMQALYTSSLVASMAFGGITAAGAIPFATQLQARINHLGITQSLLLKNQEKIAASFNKAIGHMQEGFRSTSLALQQIQDVVSKQSAILTETMASLNKNFGAISSVIQEIYQQFDAIQANAQVDRLITGRLSSLSVLASAKQAEYIRVSQQRELATQKINECVKSQSIRYSFCGNGRHVLTIPQNAPNGIVFIHFSYTPDSFVNVTAIVGFCVKPANASQYAIVPANGRGIFIQVNGSYYITARDMYMPRAITAGDVVTLTSCQANYVSVNKTVITTFVDNDDFDFNDELSKWWNDTKHELPDFDKFNYTVPILDIDSEIDRIQGVIQGLNDSLIDLEKLSILKTYIKWPWYVWLAIAFATIIFILILGWVFFMTGCCGCCCGCFGIMPLMSKCGKKSSYYTTFDNDVVTEQYRPKKSV.

The N-terminal stretch at 1-18 (MLVTPLLLVTLLCALCSA) is a signal peptide. Residues 19–1095 (VLYDSSSYVY…LKTYIKWPWY (1077 aa)) are Extracellular-facing. N51, N77, N103, N144, N163, N178, N212, N237, N247, N264, N276, N306, N425, N447, N513, N530, N579, N591, N669, N676, and N714 each carry an N-linked (GlcNAc...) asparagine; by host glycan. A heptad repeat 1 (HR1) region spans residues 769–874 (IPFATQLQAR…QVDRLITGRL (106 aa)). Positions 822–866 (QDVVSKQSAILTETMASLNKNFGAISSVIQEIYQQFDAIQANAQV) form a coiled coil. Residues N947, N960, N979, N1014, N1038, N1051, and N1074 are each glycosylated (N-linked (GlcNAc...) asparagine; by host). Residues 1024–1105 (NDDFDFNDEL…VWLAIAFATI (82 aa)) are heptad repeat 2 (HR2). Residues 1055–1083 (PILDIDSEIDRIQGVIQGLNDSLIDLEKL) adopt a coiled-coil conformation. The helical transmembrane segment at 1096–1116 (VWLAIAFATIIFILILGWVFF) threads the bilayer. Residues 1117-1162 (MTGCCGCCCGCFGIMPLMSKCGKKSSYYTTFDNDVVTEQYRPKKSV) are Cytoplasmic-facing. The short motif at 1159–1162 (KKSV) is the Di-lysine motif element.

Belongs to the gammacoronaviruses spike protein family. Homotrimer; each monomer consists of a S1 and a S2 subunit. The resulting peplomers protrude from the virus surface as spikes. Specific enzymatic cleavages in vivo yield mature proteins. The precursor is processed into S1 and S2 by host cell furin or furin-like protease to yield the mature S1 and S2 proteins. The cleavage site between S1 and S2 requires the optimal sequence [KR]-X-[KR]-R. Additionally, a second cleavage leads to the release of a fusion peptide after viral attachment to host cell receptor.

The protein resides in the virion membrane. The protein localises to the host endoplasmic reticulum-Golgi intermediate compartment membrane. Attaches the virion to the host cell membrane by interacting with sialic acids, initiating the infection. Functionally, mediates fusion of the virion and cellular membranes by acting as a class I viral fusion protein. Under the current model, the protein has at least 3 conformational states: pre-fusion native state, pre-hairpin intermediate state, and post-fusion hairpin state. During viral and target cell membrane fusion, the coiled coil regions (heptad repeats) assume a trimer-of-hairpins structure, positioning the fusion peptide in close proximity to the C-terminal region of the ectodomain. The formation of this structure appears to drive apposition and subsequent fusion of viral and target cell membranes. In terms of biological role, acts as a viral fusion peptide after S2 cleavage occurring upon virus endocytosis. The protein is Spike glycoprotein of Avian infectious bronchitis virus (strain Beaudette) (IBV).